A 107-amino-acid polypeptide reads, in one-letter code: Heme-degrading monooxygenase (107 aa).

In terms of domain architecture, ABM spans 2 to 94 (IIVTNTAKIT…YILDNKITYY (93 aa)). N6 is a binding site for Fe cation. H76 serves as a coordination point for heme.

This sequence belongs to the antibiotic biosynthesis monooxygenase family. Heme-degrading monooxygenase IsdG subfamily. In terms of assembly, homodimer.

It is found in the cytoplasm. The enzyme catalyses heme b + 3 reduced [NADPH--hemoprotein reductase] + 3 O2 = biliverdin IXalpha + CO + Fe(2+) + 3 oxidized [NADPH--hemoprotein reductase] + 3 H2O + H(+). Its function is as follows. Allows bacterial pathogens to use the host heme as an iron source. Catalyzes the oxidative degradation of the heme macrocyclic porphyrin ring to the biliverdin in the presence of a suitable electron donor such as ascorbate or NADPH--cytochrome P450 reductase, with subsequent release of free iron. This Bacillus thuringiensis subsp. konkukian (strain 97-27) protein is Heme-degrading monooxygenase.